A 282-amino-acid polypeptide reads, in one-letter code: Ribosomal RNA small subunit methyltransferase I (282 aa).

It belongs to the methyltransferase superfamily. RsmI family.

The protein localises to the cytoplasm. It catalyses the reaction cytidine(1402) in 16S rRNA + S-adenosyl-L-methionine = 2'-O-methylcytidine(1402) in 16S rRNA + S-adenosyl-L-homocysteine + H(+). Functionally, catalyzes the 2'-O-methylation of the ribose of cytidine 1402 (C1402) in 16S rRNA. The protein is Ribosomal RNA small subunit methyltransferase I of Pseudomonas aeruginosa (strain ATCC 15692 / DSM 22644 / CIP 104116 / JCM 14847 / LMG 12228 / 1C / PRS 101 / PAO1).